The primary structure comprises 420 residues: CinA-like protein (420 aa).

Belongs to the CinA family.

This chain is CinA-like protein, found in Geotalea uraniireducens (strain Rf4) (Geobacter uraniireducens).